The sequence spans 931 residues: Protocadherin gamma-A4 (931 aa).

The N-terminal stretch at 1–28 (MAAPPARPDHTRLLHICLLLGVLVEIRA) is a signal peptide. Cadherin domains lie at 29-133 (EQIR…PPSF), 134-242 (GTEQ…APVF), 243-347 (TQPE…APEV), 348-452 (TVTS…PPTF), 453-567 (PHAS…YPTF), and 570-682 (DDST…KPSA). Residues 29–692 (EQIRYSVFEE…DPDDSGLTLY (664 aa)) are Extracellular-facing. 2 N-linked (GlcNAc...) asparagine glycosylation sites follow: asparagine 419 and asparagine 545. Residues 693 to 713 (LVVSVAAVSCVFLAFVTVLLA) form a helical membrane-spanning segment. Residues 714-931 (LKLRRWHKSR…KKKSGKKEKK (218 aa)) are Cytoplasmic-facing. Disordered regions lie at residues 801–840 (KGDPNLQQAPPNTDWRFSQAQRPGTSGSQNGDDTGTWPNN) and 901–931 (ATLTNAAGKRDGKAPAGGNGNKKKSGKKEKK). A compositionally biased stretch (polar residues) spans 805 to 840 (NLQQAPPNTDWRFSQAQRPGTSGSQNGDDTGTWPNN). A compositionally biased stretch (basic residues) spans 921-931 (NKKKSGKKEKK).

It localises to the cell membrane. Functionally, potential calcium-dependent cell-adhesion protein. May be involved in the establishment and maintenance of specific neuronal connections in the brain. The sequence is that of Protocadherin gamma-A4 (PCDHGA4) from Pan troglodytes (Chimpanzee).